Consider the following 381-residue polypeptide: Hps1-dma1 cluster transcription factor tfc7 (381 aa).

The zn(2)-C6 fungal-type DNA-binding region spans 10–37; the sequence is CDHCSATKIKCTQERPQCTRCRALGRDC. The disordered stretch occupies residues 41–88; the sequence is RSLRAGKPPRSSQGLNRKISNAPVLPRQNTPVSNPTSMSSKPEHWPTM. Composition is skewed to polar residues over residues 50-59 and 67-80; these read RSSQGLNRKI and RQNTPVSNPTSMSS.

It is found in the nucleus. In terms of biological role, transcription factor that regulates the expression of the hps1-dma1 gene cluster that probably mediates the biosynthesis a derivative of cyclopiazonic acid (CPA). Further studies are required to whether the CPA-like hps1-dma1 cluster is functional or a non-functional relic reflecting evolution of D.septosporum. The polypeptide is Hps1-dma1 cluster transcription factor tfc7 (tfc7) (Dothistroma septosporum (strain NZE10 / CBS 128990) (Red band needle blight fungus)).